The following is a 75-amino-acid chain: Small ribosomal subunit protein bS18 (75 aa).

Belongs to the bacterial ribosomal protein bS18 family. Part of the 30S ribosomal subunit. Forms a tight heterodimer with protein bS6.

Functionally, binds as a heterodimer with protein bS6 to the central domain of the 16S rRNA, where it helps stabilize the platform of the 30S subunit. The polypeptide is Small ribosomal subunit protein bS18 (Shewanella loihica (strain ATCC BAA-1088 / PV-4)).